The chain runs to 752 residues: Complement C2 (752 aa).

Residues 1–20 (MGPLMVLFCLLFLYPGLADS) form the signal peptide. Sushi domains follow at residues 22-86 (PSCP…VCKP), 87-146 (VRCP…VCDN), and 149-206 (GHCP…ICRQ). Cystine bridges form between Cys-24-Cys-64, Cys-51-Cys-84, Cys-89-Cys-131, Cys-117-Cys-144, Cys-151-Cys-191, and Cys-177-Cys-204. Asn-29 carries an N-linked (GlcNAc...) asparagine glycan. The N-linked (GlcNAc...) asparagine glycan is linked to Asn-112. The 199-residue stretch at 254–452 (NLYLLLDCSQ…KALHQVFEHM (199 aa)) folds into the VWFA domain. The short motif at 260–264 (DCSQS) is the MIDAS-like motif element. 2 residues coordinate Mg(2+): Ser-262 and Ser-264. Residues Asn-290 and Asn-333 are each glycosylated (N-linked (GlcNAc...) asparagine). Mg(2+) is bound at residue Thr-337. 3 cysteine pairs are disulfide-bonded: Cys-463-Cys-581, Cys-492-Cys-508, and Cys-584-Cys-600. Residues 464–744 (GVGNMSANAS…MQPWLRQHLG (281 aa)) enclose the Peptidase S1 domain. N-linked (GlcNAc...) asparagine glycosylation is found at Asn-467 and Asn-471. Active-site charge relay system residues include His-507 and Asp-561. Asn-621 and Asn-651 each carry an N-linked (GlcNAc...) asparagine glycan. Disulfide bonds link Cys-638–Cys-665 and Cys-675–Cys-705. The active-site Charge relay system is Ser-679.

The protein belongs to the peptidase S1 family. As to quaternary structure, serine protease component of the C3 convertase, also named C4bC2b, composed of the serine protease complement C2b and complement C4b. Serine protease component of the C5 convertase, also named C4bC2bC3b, composed of the serine protease complement C2b, complement C3b, as well as complement C4b. Requires Mg(2+) as cofactor. Mn(2+) serves as cofactor. In terms of processing, cleaved and activated by different proteases depending on the complement pathway to generate complement C2a and serine protease complement C2b chains. Cleaved and activated by C1S following activation by the classical complement system. Cleaved and activated by MASP2 following activation by the lectin complement system. Cleaved and activated by GZMK following activation by the GZMK complement system.

The protein resides in the secreted. Its subcellular location is the cell surface. The enzyme catalyses Selective cleavage of Arg-|-Ser bond in complement component C3 alpha-chain to form C3a and C3b, and Arg-|-Xaa bond in complement component C5 alpha-chain to form C5a and C5b.. In terms of biological role, precursor of the catalytic component of the C3 and C5 convertase complexes, which are part of the complement pathway, a cascade of proteins that leads to phagocytosis and breakdown of pathogens and signaling that strengthens the adaptive immune system. Component C2 is part of the classical, lectin and GZMK complement systems. Catalytic component of the complement C3 and C5 convertase complexes. Following complement activation, recruited to the surface of pathogens by complement C4b opsonin to form the C3 convertase, or C3b and C4b opsonins to form the C5 convertase. As part of the C3 convertase, cleaves and activate C3 into C3a anaphylatoxin and C3b opsonin, the next components of the complement pathways. As part of the C5 convertase, cleaves and activate C5 into C5a anaphylatoxin and C5b component of the membrane attack complex. In Pan troglodytes (Chimpanzee), this protein is Complement C2.